The sequence spans 466 residues: Argininosuccinate lyase (466 aa).

The protein belongs to the lyase 1 family. Argininosuccinate lyase subfamily.

Its subcellular location is the cytoplasm. It catalyses the reaction 2-(N(omega)-L-arginino)succinate = fumarate + L-arginine. It participates in amino-acid biosynthesis; L-arginine biosynthesis; L-arginine from L-ornithine and carbamoyl phosphate: step 3/3. This chain is Argininosuccinate lyase, found in Clostridium perfringens (strain ATCC 13124 / DSM 756 / JCM 1290 / NCIMB 6125 / NCTC 8237 / Type A).